The sequence spans 551 residues: MFS efflux transporter aclA (551 aa).

Helical transmembrane passes span 26-46, 64-84, 93-113, 125-145, 154-174, 181-201, 220-240, and 251-271; these read WAVFVSLCFASFVASLDITAI, VWIANSYTLASAVVQPLIGQI, PMIILMCLFALGSGICGGATS, GLGAGGILLLLEVIVCDLVPL, IALSTCALGISLGPLVGGALV, WVFYINLPCAGVALVALVLCL, WVGNTIFIAAICAIMYALVIG, and VLVPLVLGAFGWVLFHIFEAS. Asn-286 is a glycosylation site (N-linked (GlcNAc...) asparagine). 6 helical membrane passes run 294-314, 327-347, 356-376, 385-405, 420-440, and 492-512; these read VLAFLAAMLMQWVVYFLTLFF, VDVIPFTGFMIPSAIVGGAIM, LHWAGFALLSICMGVFSTWDA, ILQCLVGLGHGLLLTSVLPAI, AYAFLRSFGFVWGVEIPAVVF, and LRTVWQVGMAFALLGFALVVV.

Belongs to the major facilitator superfamily.

The protein resides in the membrane. MFS efflux transporter; part of the gene cluster that mediates the biosynthesis of aspirochlorine (or antibiotic A30641), an unusual halogenated spiro compound with distinctive antifungal properties due to selective inhibition of protein biosynthesis, and which is also active against bacteria, viruses, and murine tumor cells. This Aspergillus oryzae (strain ATCC 42149 / RIB 40) (Yellow koji mold) protein is MFS efflux transporter aclA.